Here is a 190-residue protein sequence, read N- to C-terminus: Interferon alpha-7 (190 aa).

The first 23 residues, 1–23, serve as a signal peptide directing secretion; that stretch reads MARLCAFLMVLAVMSYWPTCCLG. 2 disulfides stabilise this stretch: Cys24-Cys122 and Cys52-Cys162. The N-linked (GlcNAc...) asparagine glycan is linked to Asn101.

The protein belongs to the alpha/beta interferon family.

The protein resides in the secreted. Its function is as follows. Produced by macrophages, IFN-alpha have antiviral activities. Interferon stimulates the production of two enzymes: a protein kinase and an oligoadenylate synthetase. The polypeptide is Interferon alpha-7 (Ifna7) (Mus musculus (Mouse)).